The following is a 600-amino-acid chain: NADH-quinone oxidoreductase subunit C/D (600 aa).

Residues 1-190 (MIDLMPKKNT…EPFFLNEQKE (190 aa)) are NADH dehydrogenase I subunit C. Positions 214 to 600 (EFMFLNLGPN…IDFVMSDVDR (387 aa)) are NADH dehydrogenase I subunit D.

In the N-terminal section; belongs to the complex I 30 kDa subunit family. The protein in the C-terminal section; belongs to the complex I 49 kDa subunit family. As to quaternary structure, NDH-1 is composed of 13 different subunits. Subunits NuoB, CD, E, F, and G constitute the peripheral sector of the complex.

Its subcellular location is the cell membrane. It carries out the reaction a quinone + NADH + 5 H(+)(in) = a quinol + NAD(+) + 4 H(+)(out). NDH-1 shuttles electrons from NADH, via FMN and iron-sulfur (Fe-S) centers, to quinones in the respiratory chain. The immediate electron acceptor for the enzyme in this species is believed to be ubiquinone. Couples the redox reaction to proton translocation (for every two electrons transferred, four hydrogen ions are translocated across the cytoplasmic membrane), and thus conserves the redox energy in a proton gradient. The protein is NADH-quinone oxidoreductase subunit C/D of Buchnera aphidicola subsp. Acyrthosiphon pisum (strain 5A).